The following is a 430-amino-acid chain: tRNA(Ile)-lysidine synthase (430 aa).

Residue 21-26 participates in ATP binding; the sequence is SGGLDS.

This sequence belongs to the tRNA(Ile)-lysidine synthase family.

It is found in the cytoplasm. The catalysed reaction is cytidine(34) in tRNA(Ile2) + L-lysine + ATP = lysidine(34) in tRNA(Ile2) + AMP + diphosphate + H(+). Functionally, ligates lysine onto the cytidine present at position 34 of the AUA codon-specific tRNA(Ile) that contains the anticodon CAU, in an ATP-dependent manner. Cytidine is converted to lysidine, thus changing the amino acid specificity of the tRNA from methionine to isoleucine. The chain is tRNA(Ile)-lysidine synthase from Salmonella agona (strain SL483).